A 255-amino-acid polypeptide reads, in one-letter code: Large ribosomal subunit protein uL4 (255 aa).

It belongs to the universal ribosomal protein uL4 family. In terms of assembly, part of the 50S ribosomal subunit.

One of the primary rRNA binding proteins, this protein initially binds near the 5'-end of the 23S rRNA. It is important during the early stages of 50S assembly. It makes multiple contacts with different domains of the 23S rRNA in the assembled 50S subunit and ribosome. Its function is as follows. Forms part of the polypeptide exit tunnel. The chain is Large ribosomal subunit protein uL4 from Thermococcus kodakarensis (strain ATCC BAA-918 / JCM 12380 / KOD1) (Pyrococcus kodakaraensis (strain KOD1)).